Here is a 61-residue protein sequence, read N- to C-terminus: Protein stunted (61 aa).

The tract at residues 3-15 (AWRAAGITYIQYS) is sufficient for mth activation.

It belongs to the eukaryotic ATPase epsilon family.

Functionally, activates the G-protein coupled receptor mth in vitro, leading to increased intracellular calcium ion levels. In Drosophila melanogaster (Fruit fly), this protein is Protein stunted.